A 178-amino-acid chain; its full sequence is ATP-dependent protease subunit HslV (178 aa).

The active site involves T7. The Na(+) site is built by G162, C165, and T168.

Belongs to the peptidase T1B family. HslV subfamily. In terms of assembly, a double ring-shaped homohexamer of HslV is capped on each side by a ring-shaped HslU homohexamer. The assembly of the HslU/HslV complex is dependent on binding of ATP.

It localises to the cytoplasm. It carries out the reaction ATP-dependent cleavage of peptide bonds with broad specificity.. Allosterically activated by HslU binding. Functionally, protease subunit of a proteasome-like degradation complex believed to be a general protein degrading machinery. This Cupriavidus necator (strain ATCC 17699 / DSM 428 / KCTC 22496 / NCIMB 10442 / H16 / Stanier 337) (Ralstonia eutropha) protein is ATP-dependent protease subunit HslV.